Here is a 435-residue protein sequence, read N- to C-terminus: ATP-dependent protease ATPase subunit HslU (435 aa).

ATP contacts are provided by residues Val18, Gly60–Glu65, Asp248, Glu313, and Arg385.

The protein belongs to the ClpX chaperone family. HslU subfamily. A double ring-shaped homohexamer of HslV is capped on each side by a ring-shaped HslU homohexamer. The assembly of the HslU/HslV complex is dependent on binding of ATP.

The protein localises to the cytoplasm. In terms of biological role, ATPase subunit of a proteasome-like degradation complex; this subunit has chaperone activity. The binding of ATP and its subsequent hydrolysis by HslU are essential for unfolding of protein substrates subsequently hydrolyzed by HslV. HslU recognizes the N-terminal part of its protein substrates and unfolds these before they are guided to HslV for hydrolysis. This chain is ATP-dependent protease ATPase subunit HslU, found in Azorhizobium caulinodans (strain ATCC 43989 / DSM 5975 / JCM 20966 / LMG 6465 / NBRC 14845 / NCIMB 13405 / ORS 571).